The sequence spans 2844 residues: Sodium channel protein 60E (2844 aa).

At 1–121 the chain is on the cytoplasmic side; it reads MSDDQATFND…WSPARRVCVY (121 aa). An I repeat occupies 107 to 434; sequence FLFYPWSPAR…FDPSVLNVKK (328 aa). The helical transmembrane segment at 122 to 145 threads the bilayer; the sequence is IATNQFFDYCVMATILFNCIFLAM. At 146 to 151 the chain is on the extracellular side; that stretch reads TETVEE. The helical transmembrane segment at 152–172 threads the bilayer; sequence AEYIFLAIYSIEMVIKIIAKG. Topologically, residues 173–183 are cytoplasmic; that stretch reads FLLNKYTYLRN. The chain crosses the membrane as a helical span at residues 184-202; that stretch reads PWNWLDFVVITSGYATIGM. Residues 203 to 208 lie on the Extracellular side of the membrane; it reads EVGNLA. The chain crosses the membrane as a helical; Voltage-sensor span at residues 209 to 228; that stretch reads GLRTFRVLRALKTVSIMPGL. At 229 to 244 the chain is on the cytoplasmic side; the sequence is KTIINALLHSFRQLAE. Residues 245 to 265 form a helical membrane-spanning segment; the sequence is VMTLTIFCLMVFALFALQVYM. Over 266–340 the chain is Extracellular; sequence GELRNKCVRQ…PNHGYTNFDN (75 aa). A disulfide bond links Cys272 and Cys318. Asn282, Asn293, and Asn311 each carry an N-linked (GlcNAc...) asparagine glycan. An intramembrane region (pore-forming) is located at residues 341 to 365; sequence FMWSMLTTFQLITLDYWENVYNMVL. Residues 366–374 are Extracellular-facing; the sequence is ATCGPMSVS. A helical membrane pass occupies residues 375–395; the sequence is FFTVVVFFGSFYLINLMLAVV. The Cytoplasmic segment spans residues 396 to 687; it reads ALSYEEEAEI…QNCLYKVVRD (292 aa). Residues 452 to 610 are disordered; the sequence is ASYSKKKTRR…QDTTNDMGHV (159 aa). Residues 455–465 are compositionally biased toward basic residues; the sequence is SKKKTRRKKTK. Gly residues predominate over residues 469 to 479; that stretch reads EGGTNGNGNGS. 2 stretches are compositionally biased toward low complexity: residues 511–520 and 577–586; these read QAQKQYQQME and SSNSSGVNRE. Residues 593–603 are compositionally biased toward acidic residues; the sequence is GVVDDHEEQDT. Residues 668–1130 form an II repeat; it reads CTDYESWLQF…ESIELLGQYN (463 aa). Residues 688-708 traverse the membrane as a helical segment; the sequence is PLFELAITLCIVLNTAFLAME. At 709–718 the chain is on the extracellular side; sequence HHGMSESFRN. Residues 719 to 743 form a helical membrane-spanning segment; that stretch reads ALDVGNKVFTSIFTFECIVKLMALS. The Cytoplasmic segment spans residues 744 to 749; sequence KDFFLC. A helical transmembrane segment spans residues 750 to 769; sequence GWNIFDLLIVTASLLDIIFE. Residues 770–775 are Extracellular-facing; that stretch reads LVDGLS. A helical; Voltage-sensor membrane pass occupies residues 776–795; sequence VLRGLRLLRVLKLAQSWTTM. Topologically, residues 796-810 are cytoplasmic; sequence KVLLSIIISTIGALG. A helical membrane pass occupies residues 811–832; sequence NLTLILVIVIYIFAVIGMQLFS. The Extracellular segment spans residues 833–852; sequence KDYTPEKFDPDPVPRWNFND. Positions 853–873 form an intramembrane region, pore-forming; that stretch reads FFHSFMMIFRILCGEWIEPLW. Residues 874-889 are Extracellular-facing; it reads DCMRAEEEQGASTCFA. Cys875 and Cys887 form a disulfide bridge. Residues 890–910 traverse the membrane as a helical segment; the sequence is IFLPTLVMGNFMVLNLFLALL. The Cytoplasmic portion of the chain corresponds to 911 to 1742; the sequence is LNSFNSEELK…SAKHWTRVRT (832 aa). The span at 1129–1157 shows a compositional bias: polar residues; it reads YNSTDTDPYANDQRSGCGSFNRGDSLQDN. Disordered stretches follow at residues 1129–1166, 1185–1224, 1268–1288, 1577–1630, and 1635–1654; these read YNST…GSEE, YRKS…NSMS, ISNV…ENET, APTP…ADAS, and LAMA…ATQK. Residues 1191 to 1203 are compositionally biased toward low complexity; the sequence is RLSQSSGQSQRSL. Basic and acidic residues predominate over residues 1204–1213; that stretch reads LKSEEAEMRR. Polar residues-rich tracts occupy residues 1277–1286, 1604–1618, and 1640–1654; these read PSSQMGQPEN, PQST…QSAR, and KTEQ…ATQK. The III repeat unit spans residues 1723–2040; that stretch reads PWFMSCMDTQ…QKHYYTAMKK (318 aa). The chain crosses the membrane as a helical span at residues 1743 to 1763; the sequence is AVLTVVDTPAFEWFVLVLIFA. Topologically, residues 1764–1789 are extracellular; the sequence is SSITLCFEDINLDKNKTLKRVLYWIN. Asn1778 and Asn1789 each carry an N-linked (GlcNAc...) asparagine glycan. A helical transmembrane segment spans residues 1790–1810; sequence FSFCLIFVVEMILKWLALGFS. The Cytoplasmic portion of the chain corresponds to 1811–1813; that stretch reads KYF. Residues 1814-1834 form a helical membrane-spanning segment; the sequence is TSFWTILDFIIVFVSVFSLLI. The Extracellular segment spans residues 1835–1839; it reads EENEN. Residues 1840-1861 traverse the membrane as a helical; Voltage-sensor segment; it reads LKVLRSLRTLRALRPLRAISRW. Topologically, residues 1862-1880 are cytoplasmic; it reads QGMRIVVNALMYAIPSIFN. Residues 1881–1902 traverse the membrane as a helical segment; that stretch reads VLLVCLVFWLIFSIMGVQFFGG. Residues 1903 to 1943 lie on the Extracellular side of the membrane; that stretch reads KFFKCVNEMGELLPITEVNDKWDCIEQNYTWINSKITFDHV. The N-linked (GlcNAc...) asparagine glycan is linked to Asn1930. Residues 1944-1965 constitute an intramembrane region (pore-forming); the sequence is GMGYLALLQVATFEGWMEVMAD. Over 1966 to 1981 the chain is Extracellular; the sequence is AVDARGVDLQPQREAN. A helical transmembrane segment spans residues 1982 to 2002; the sequence is LYAYIYFVIFIVCGSFFTLNL. At 2003–2069 the chain is on the cytoplasmic side; it reads FIGVIIDNFN…MFYDLSNSRR (67 aa). Residues 2050–2311 form an IV repeat; it reads IKRPINHFLA…NMYIAIILEN (262 aa). A helical membrane pass occupies residues 2070-2090; sequence FEIAIFVLIFLNMLTMGIEHY. Over 2091-2095 the chain is Extracellular; it reads DQPHA. A helical membrane pass occupies residues 2096-2116; that stretch reads VFFILEVSNAFFTTVFGLEAI. Over 2117 to 2132 the chain is Cytoplasmic; sequence VKIVGLRYHYFTVPWN. Residues 2133 to 2153 form a helical membrane-spanning segment; sequence VFDFLLVLASIFGILMEDIMI. The Extracellular portion of the chain corresponds to 2154–2162; sequence DLPISPTLL. The chain crosses the membrane as a helical; Voltage-sensor span at residues 2163 to 2184; it reads RVVRVFRIGRILRLIKAAKGIR. Residues 2185 to 2199 lie on the Cytoplasmic side of the membrane; sequence KLLFALVVSLPALFN. A helical membrane pass occupies residues 2200 to 2220; sequence IGALLGLITFIYAILGMSLFG. Over 2221 to 2236 the chain is Extracellular; sequence NVKLQGALDDMVNFQT. The pore-forming intramembrane region spans 2237-2259; that stretch reads FGRSMQLLFRLMTSAGWNDVLES. The Extracellular portion of the chain corresponds to 2260-2288; the sequence is LMIQPPDCDPFIHGHTNGNCGHPLLAITY. A helical membrane pass occupies residues 2289 to 2309; that stretch reads FTSFIIISYMIVINMYIAIIL. Residues 2310–2844 are Cytoplasmic-facing; the sequence is ENFNQAHQEE…QFESLPDRQR (535 aa). One can recognise an IQ domain in the interval 2441–2470; sequence QEKAAKTIQTGWKEYLRRKREKERSNSGDS. Disordered stretches follow at residues 2457–2479, 2584–2668, 2780–2802, and 2818–2844; these read RRKR…SPGG, SLTS…LSAQ, DSPK…GAPI, and NPEK…DRQR. Polar residues predominate over residues 2467–2479; the sequence is SGDSATQTSSPGG. Residues 2595–2632 are compositionally biased toward low complexity; sequence AMNNTTNTTSNSASTSGTASSTATAPATGCGPAATSAS. The span at 2647–2658 shows a compositional bias: basic residues; sequence SRKRASSFIRKK. Over residues 2825–2836 the composition is skewed to polar residues; it reads DQGNGQDETAQF.

This sequence belongs to the sodium channel (TC 1.A.1.10) family. NaCP60E subfamily. In terms of tissue distribution, in embryonic and larval stages, expression is limited to very few non-neuronal cells in either the CNS or PNS. In pupal and adult stages, expressed in cell bodies of the fly central nervous system, including optic lobes, central brain, subesophageal ganglion, thoracico-abdominal ganglion, major olfactory organs, the third antennal segment and the maxillary palps.

It is found in the cell membrane. Functionally, mediates the voltage-dependent sodium ion permeability of excitable membranes. Plays a role in processing of olfactory information during the olfactory avoidance response. The sequence is that of Sodium channel protein 60E (NaCP60E) from Drosophila melanogaster (Fruit fly).